Consider the following 748-residue polypeptide: Catalase-peroxidase (748 aa).

Polar residues predominate over residues 1–16 (MSSDTSASRPPQPDTR). A disordered region spans residues 1–43 (MSSDTSASRPPQPDTRTASKSESENPAIPSPHPKSNAPLTNRD). Residues 113 to 238 (WHAAGTYRIH…YGATTMGLIY (126 aa)) constitute a cross-link (tryptophyl-tyrosyl-methioninium (Trp-Tyr) (with M-264)). Residue H114 is the Proton acceptor of the active site. The segment at residues 238 to 264 (YVNPEGPEGKPDPIAAAIDIRETFGRM) is a cross-link (tryptophyl-tyrosyl-methioninium (Tyr-Met) (with W-113)). H279 is a heme b binding site.

This sequence belongs to the peroxidase family. Peroxidase/catalase subfamily. In terms of assembly, homodimer or homotetramer. Heme b is required as a cofactor. Post-translationally, formation of the three residue Trp-Tyr-Met cross-link is important for the catalase, but not the peroxidase activity of the enzyme.

It catalyses the reaction H2O2 + AH2 = A + 2 H2O. The catalysed reaction is 2 H2O2 = O2 + 2 H2O. Bifunctional enzyme with both catalase and broad-spectrum peroxidase activity. This chain is Catalase-peroxidase, found in Mycolicibacterium paratuberculosis (strain ATCC BAA-968 / K-10) (Mycobacterium paratuberculosis).